The following is a 475-amino-acid chain: Bifunctional protein HldE (475 aa).

The segment at 1–317 (MQYSAQFNRA…ENAIHGRTTA (317 aa)) is ribokinase. 194-197 (NMSE) is a binding site for ATP. Asp-263 is an active-site residue. A cytidylyltransferase region spans residues 343–475 (MTNGCFDILH…VIKKIQQLKE (133 aa)).

It in the N-terminal section; belongs to the carbohydrate kinase PfkB family. The protein in the C-terminal section; belongs to the cytidylyltransferase family. As to quaternary structure, homodimer.

It catalyses the reaction D-glycero-beta-D-manno-heptose 7-phosphate + ATP = D-glycero-beta-D-manno-heptose 1,7-bisphosphate + ADP + H(+). The catalysed reaction is D-glycero-beta-D-manno-heptose 1-phosphate + ATP + H(+) = ADP-D-glycero-beta-D-manno-heptose + diphosphate. It participates in nucleotide-sugar biosynthesis; ADP-L-glycero-beta-D-manno-heptose biosynthesis; ADP-L-glycero-beta-D-manno-heptose from D-glycero-beta-D-manno-heptose 7-phosphate: step 1/4. Its pathway is nucleotide-sugar biosynthesis; ADP-L-glycero-beta-D-manno-heptose biosynthesis; ADP-L-glycero-beta-D-manno-heptose from D-glycero-beta-D-manno-heptose 7-phosphate: step 3/4. In terms of biological role, catalyzes the phosphorylation of D-glycero-D-manno-heptose 7-phosphate at the C-1 position to selectively form D-glycero-beta-D-manno-heptose-1,7-bisphosphate. Its function is as follows. Catalyzes the ADP transfer from ATP to D-glycero-beta-D-manno-heptose 1-phosphate, yielding ADP-D-glycero-beta-D-manno-heptose. In Histophilus somni (strain 129Pt) (Haemophilus somnus), this protein is Bifunctional protein HldE.